The sequence spans 189 residues: MYLVVGLGNIGKEYKKTRHNIGFDVVDIIAEKYNIEINRQKFKGSYGEGRIGNEKIILLKPSTYMNLSGESVIEAANFYKIDKENIIVIYDDMSIDIGKLRVRGKGSAGGHNGIKNIIQHLNSDIFPRVRVGIGQPDENVVNYVLGKFSKDQREIIEKVLAMSAKACISIVEDGVTEAMNKYNGVKIEV.

Tyrosine 14 is a tRNA binding site. Residue histidine 19 is the Proton acceptor of the active site. Positions 64, 66, and 112 each coordinate tRNA.

It belongs to the PTH family. In terms of assembly, monomer.

The protein resides in the cytoplasm. The enzyme catalyses an N-acyl-L-alpha-aminoacyl-tRNA + H2O = an N-acyl-L-amino acid + a tRNA + H(+). In terms of biological role, hydrolyzes ribosome-free peptidyl-tRNAs (with 1 or more amino acids incorporated), which drop off the ribosome during protein synthesis, or as a result of ribosome stalling. Its function is as follows. Catalyzes the release of premature peptidyl moieties from peptidyl-tRNA molecules trapped in stalled 50S ribosomal subunits, and thus maintains levels of free tRNAs and 50S ribosomes. The sequence is that of Peptidyl-tRNA hydrolase from Clostridium botulinum (strain Langeland / NCTC 10281 / Type F).